The following is a 404-amino-acid chain: Subtilisin-like protease 3 (404 aa).

A signal peptide spans 1-20 (MLFSKSLVALVACFLPLIVS). A propeptide spanning residues 21 to 114 (ATELKLRNAA…VDKDVKVSAY (94 aa)) is cleaved from the precursor. The region spanning 38–112 (SYIVVYKDID…AYVDKDVKVS (75 aa)) is the Inhibitor I9 domain. The Peptidase S8 domain occupies 123 to 404 (PWGLDRISHR…DNLAYNDDGY (282 aa)). Asn133 is a glycosylation site (N-linked (GlcNAc...) asparagine). Catalysis depends on charge relay system residues Asp158 and His190. N-linked (GlcNAc...) asparagine glycosylation is found at Asn243, Asn251, Asn286, Asn307, and Asn340. Catalysis depends on Ser347, which acts as the Charge relay system. N-linked (GlcNAc...) asparagine glycosylation is present at Asn366.

The protein belongs to the peptidase S8 family.

Its subcellular location is the secreted. Secreted subtilisin-like serine endopeptidase. Mediates the degradation of collagen, the major structural protein in the mammalian host. Degrades the nonhelical regions of collagen that function in the cross-linking of the helical components. May function as virulence factor involved in epidermal wing necrosis observed in white nose syndrome (WNS) in bats. This Pseudogymnoascus destructans (strain ATCC MYA-4855 / 20631-21) (Bat white-nose syndrome fungus) protein is Subtilisin-like protease 3.